Reading from the N-terminus, the 431-residue chain is Saglin (431 aa).

The signal sequence occupies residues 1–39; it reads MSVRDYSGVQVISSRKHRSMSRLPTVLLLLASAAVLAAG. N-linked (GlcNAc...) asparagine glycosylation is present at N95. Residues 120-169 are a coiled coil; the sequence is LDDAQRQMEQEHRQYAATLEEQLHAAQQETQQEQEMKKALQKQLDALTDS.

In terms of assembly, homodimer. In terms of tissue distribution, female salivary gland (at protein level). Not detected in female carcass without salivary glands, midgut and hemolymph (at protein level). Probably not expressed in male tissues.

It is found in the secreted. Its function is as follows. (Microbial infection) Facilitates efficient midgut colonization by Plasmodium berghei parasites. Promotes successful transmission of Plasmodium berghei at low infection densities. In terms of biological role, (Microbial infection) Facilitates efficient midgut colonization by Plasmodium falciparum. This Anopheles coluzzii (African malaria mosquito) protein is Saglin.